The sequence spans 144 residues: Peptidyl-Asp metalloendopeptidase (144 aa).

Zn(2+) is bound at residue H64. The active site involves E65. A Zn(2+)-binding site is contributed by H68.

The protein belongs to the peptidase M72 family. Zn(2+) serves as cofactor.

The catalysed reaction is Cleavage of Xaa-|-Asp, Xaa-|-Glu and Xaa-|-cysteic acid bonds.. Its function is as follows. Metalloprotease, specifically cleaves on the N-terminal side of aspartyl, glutamyl and cysteic acid residues. The sequence is that of Peptidyl-Asp metalloendopeptidase from Pseudomonas fragi.